The chain runs to 350 residues: tRNA uridine(34) hydroxylase (350 aa).

One can recognise a Rhodanese domain in the interval 146–240; that stretch reads DDPDALFIDM…YARKAREQGL (95 aa). The Cysteine persulfide intermediate role is filled by Cys-200.

The protein belongs to the TrhO family.

It catalyses the reaction uridine(34) in tRNA + AH2 + O2 = 5-hydroxyuridine(34) in tRNA + A + H2O. Functionally, catalyzes oxygen-dependent 5-hydroxyuridine (ho5U) modification at position 34 in tRNAs, the first step in 5-carboxymethoxyuridine (cmo5U) biosynthesis. May be part of an alternate pathway, which is able to bypass cmo5U biogenesis in a subset of tRNAs under aerobic conditions. The polypeptide is tRNA uridine(34) hydroxylase (Escherichia coli (strain K12)).